The following is a 289-amino-acid chain: MSEPFEIVAGALGVAGLFNNCVACFEYVQLGRHFGRDYERCQLRLDIAKVRLSRWGEAVQINDDPRFHSSAPIDKSVQLAKSIVEEILLLFESAQKTSKRYELVADQQDLVVFEDKDMKPIGRALHRRLKDLVSRRQKQTSLAKKTAWALYDGKSLEKIVDQVAGFVDELEKAFPIEAVCHKLAENEIEEVEDEASLTILKDAAGGIDAAMSDAAAQKIDAIVGRNSAKDIRTEKRARVQLGNVVTAAALHGEIRISDQTTNSVETVVGKGESKVLIGNEYGGKGFWDN.

The tract at residues 1 to 227 (MSEPFEIVAG…KIDAIVGRNS (227 aa)) is globular domain. The interval 218 to 289 (KIDAIVGRNS…EYGGKGFWDN (72 aa)) is prion domain (PrD).

Homodimer. Forms heterodimers with het-s.

The protein localises to the cytoplasm. Its function is as follows. Responsible for heterokaryon incompatibility, a process that ensures that during spontaneous, vegetative cell fusion only compatible cells from the same colony survive (non-self-recognition). Interaction with the prion form [het-s] of incompatible cells triggers a lethal reaction that prevents the formation of viable heterokaryons. The protein is Heterokaryon incompatibility protein S (het-S) of Podospora anserina (strain S / ATCC MYA-4624 / DSM 980 / FGSC 10383) (Pleurage anserina).